The following is a 354-amino-acid chain: Arginase-2, mitochondrial (354 aa).

A mitochondrion-targeting transit peptide spans 1–22; that stretch reads MSLRSHLSRLLRTQVHSVRKKS. Histidine 120, aspartate 143, histidine 145, and aspartate 147 together coordinate Mn(2+). Substrate-binding positions include 145-149, 156-158, and aspartate 202; these read HADIN and SGN. Aspartate 251 and aspartate 253 together coordinate Mn(2+). 2 residues coordinate substrate: threonine 265 and glutamate 296. Residues 332 to 354 are disordered; it reads IVYDQLPTPSSPDESESEERVRI.

This sequence belongs to the arginase family. As to quaternary structure, homotrimer. Mn(2+) is required as a cofactor.

It localises to the mitochondrion. The enzyme catalyses L-arginine + H2O = urea + L-ornithine. It participates in nitrogen metabolism; urea cycle; L-ornithine and urea from L-arginine: step 1/1. Its function is as follows. May play a role in the regulation of extra-urea cycle arginine metabolism and also in down-regulation of nitric oxide synthesis. Extrahepatic arginase functions to regulate L-arginine bioavailability to nitric oxid synthase (NOS). Arginine metabolism is a critical regulator of innate and adaptive immune responses. Seems to be involved in negative regulation of the survival capacity of activated T cells. May suppress inflammation-related signaling in asthmatic airway epithelium. May play a role in promoting prenatal immune suppression. Regulates RPS6KB1 signaling, which promotes endothelial cell senescence and inflammation and implicates NOS3/eNOS dysfunction. Can inhibit endothelial autophagy independently of its enzymatic activity implicating mTORC2 signaling. Involved in vascular smooth muscle cell senescence and apoptosis independently of its enzymatic activity. This chain is Arginase-2, mitochondrial (ARG2), found in Bos taurus (Bovine).